The sequence spans 563 residues: Heat shock 70 kDa protein 8 (563 aa).

Residues 1–25 (MAEAAYTVASDSENTGEEKSSSSPS) are disordered. A2 bears the N-acetylalanine mark.

The protein belongs to the heat shock protein 70 (TC 1.A.33) family. DnaK subfamily.

Its function is as follows. In cooperation with other chaperones, Hsp70s are key components that facilitate folding of de novo synthesized proteins, assist translocation of precursor proteins into organelles, and are responsible for degradation of damaged protein under stress conditions. The chain is Heat shock 70 kDa protein 8 (HSP70-8) from Arabidopsis thaliana (Mouse-ear cress).